The primary structure comprises 218 residues: Sodium channel regulatory subunit beta-1 (218 aa).

The signal sequence occupies residues 1–18; sequence MGTLLAFVVGAALVSSAW. Residues 19–157 are Extracellular-facing; sequence GGCVEVDSET…DKANRDMASI (139 aa). 2 cysteine pairs are disulfide-bonded: cysteine 21–cysteine 43 and cysteine 40–cysteine 121. Residues 22–150 enclose the Ig-like C2-type domain; it reads VEVDSETEAV…KIHLEVVDKA (129 aa). Asparagine 93, asparagine 110, asparagine 114, and asparagine 135 each carry an N-linked (GlcNAc...) asparagine glycan. A helical membrane pass occupies residues 158–179; sequence VSEIMMYVLIVVLTIWLVAEMV. Over 180–218 the chain is Cytoplasmic; it reads YCYKKIAAATEAAAQENASEYLAITSESKENCTGVQVAE.

The protein belongs to the sodium channel auxiliary subunit SCN1B (TC 8.A.17) family. As to quaternary structure, a voltage-gated sodium (Nav) channel consists of an ion-conducting pore-forming alpha subunit functional on its own that is regulated by one or more beta subunits. Interacts with SCN1A; regulatory subunit of SCN1A/Nav1.1. Interacts with SCN3A; regulatory subunit of SCN3A/Nav1.3. Interacts with SCN4A; regulatory subunit of SCN4A/Nav1.4. Interacts with SCN5A; regulatory subunit of SCN5A/Nav1.5. Interacts with SCN8A; regulatory subunit of SCN8A/Nav1.6. Interacts with SCN9A; regulatory subunit of SCN9A/Nav1.7. Interacts with SCN10A; regulatory subunit of SCN10A/Nav1.8. Interacts with NFASC. Interacts with TMEM65.

The protein localises to the cell membrane. It localises to the perikaryon. Its subcellular location is the cell projection. The protein resides in the axon. Its function is as follows. Regulatory subunit of multiple voltage-gated sodium (Nav) channels directly mediating the depolarization of excitable membranes. Navs, also called VGSCs (voltage-gated sodium channels) or VDSCs (voltage-dependent sodium channels), operate by switching between closed and open conformations depending on the voltage difference across the membrane. In the open conformation they allow Na(+) ions to selectively pass through the pore, along their electrochemical gradient. The influx of Na+ ions provokes membrane depolarization, initiating the propagation of electrical signals throughout cells and tissues. The accessory beta subunits participate in localization and functional modulation of the Nav channels. Modulates the activity of SCN1A/Nav1.1, SCN2A/Nav1.2, SCN3A/Nav1.3, SCN4A/Nav1.4, SCN5A/Nav1.5, SCN8A/Nav1.6, SCN9A/Nav1.7 and SCN10A/Nav1.8. This is Sodium channel regulatory subunit beta-1 from Bos taurus (Bovine).